A 396-amino-acid polypeptide reads, in one-letter code: Ribosomal RNA large subunit methyltransferase I (396 aa).

The PUA domain maps to 2 to 79 (TSAVYLQAGR…EKEVIDQHFF (78 aa)).

The protein belongs to the methyltransferase superfamily. RlmI family.

The protein resides in the cytoplasm. It catalyses the reaction cytidine(1962) in 23S rRNA + S-adenosyl-L-methionine = 5-methylcytidine(1962) in 23S rRNA + S-adenosyl-L-homocysteine + H(+). In terms of biological role, specifically methylates the cytosine at position 1962 (m5C1962) of 23S rRNA. In Pseudoalteromonas translucida (strain TAC 125), this protein is Ribosomal RNA large subunit methyltransferase I.